The chain runs to 357 residues: Trans-enoyl reductase resD (357 aa).

Y211 provides a ligand contact to NADP(+).

It belongs to the zinc-containing alcohol dehydrogenase family.

It functions in the pathway antifungal biosynthesis. Functionally, trans-enoyl reductase; part of the gene cluster that mediates the biosynthesis of the tetrahydropyranyl antifungal agent restricticin that acts as an inhibitor of CYP51 and blocks the ergosterol biosynthesis. The highly reducing polyketide synthase resH, the short chain dehydrogenase resG, the cyclase resF, the FAD-dependent monooxygenase resA and the enoylreductase resD are required to generate the first stable intermediate desmethylrestrictinol. ResH with resD biosynthesize the first polyketide chain intermediate that is reduced by resG, followed by epoxidation by resA before 6-endo cyclization via epoxide opening by resF leads to desmethylrestrictinol. The methyltransferase resE then catalyzes the C4 O-methylation of desmethylrestrictinol to produce restrictinol, and the nonribosomal peptide synthetase resC catalyzes the C3 esterification of restrictinol with glycine that leads to restricticin. This chain is Trans-enoyl reductase resD, found in Aspergillus sclerotiorum.